We begin with the raw amino-acid sequence, 954 residues long: Zinc finger protein 618 (954 aa).

Met-1 is modified (N-acetylmethionine). Low complexity predominate over residues 1–19 (MNQPGGAAAPQADGASAAG). The segment at 1–56 (MNQPGGAAAPQADGASAAGRKSTASRERLKRSQKSTKVEGPEPVPAEASLSAEQGT) is disordered. Residues Lys-63 and Lys-81 each participate in a glycyl lysine isopeptide (Lys-Gly) (interchain with G-Cter in SUMO2) cross-link. 2 consecutive C2H2-type zinc fingers follow at residues 147 to 169 (YECG…VRAH) and 188 to 210 (YTCD…RDLH). Residue Lys-239 forms a Glycyl lysine isopeptide (Lys-Gly) (interchain with G-Cter in SUMO2) linkage. The segment at 256–278 (YTCEFCGKQYKYYTPYQEHVALH) adopts a C2H2-type 3 zinc-finger fold. Disordered regions lie at residues 282 to 307 (STAP…VSPS) and 337 to 390 (RTPP…NSSE). The span at 340-357 (PATQTQTFRTPNSGSPAS) shows a compositional bias: polar residues. Positions 366 to 380 (FSRRVEGKAQNHFEE) are enriched in basic and acidic residues. Residues 392-414 (YTCGACGIQFQFYNNLLEHMQSH) form a C2H2-type 4 zinc finger. A disordered region spans residues 421 to 463 (NIASNQSRSPPAVVEEKWKPQAQRNSANNTTTSGLTPNSMIPE). Residue Lys-437 forms a Glycyl lysine isopeptide (Lys-Gly) (interchain with G-Cter in SUMO2) linkage. Residues 442 to 459 (AQRNSANNTTTSGLTPNS) show a composition bias toward polar residues.

The protein belongs to the krueppel C2H2-type zinc-finger protein family. In terms of assembly, interacts with UHRF2.

Its subcellular location is the nucleus. It is found in the chromosome. Regulates UHRF2 function as a specific 5-hydroxymethylcytosine (5hmC) reader by regulating its chromatin localization. This chain is Zinc finger protein 618 (ZNF618), found in Homo sapiens (Human).